An 815-amino-acid polypeptide reads, in one-letter code: Putative transcription factor phnE (815 aa).

The tract at residues 522–577 (PSRRNSDGSAHSSPSSTPSSSSTSSPLPSPASERPPPLDVVTRPSTGTSTPSSPTL) is disordered. A compositionally biased stretch (low complexity) spans 523–547 (SRRNSDGSAHSSPSSTPSSSSTSSP). Positions 548-559 (LPSPASERPPPL) are enriched in pro residues. Residues 563–577 (TRPSTGTSTPSSPTL) are compositionally biased toward low complexity.

It localises to the nucleus. In terms of biological role, putative transcription factor that may be involved in the regulation of the expression of the gene cluster that mediates the biosynthesis of phenalenones such as herqueinone, compounds that have been reported to treat tumors, bacterial infections and/or mycoses, and rheumatic diseases. This chain is Putative transcription factor phnE, found in Penicillium herquei.